Here is a 177-residue protein sequence, read N- to C-terminus: Nuclear export protein (177 aa).

Short sequence motifs (nuclear export signal) lie at residues 91–100 (LWLPMKSLSL) and 117–127 (MKHQILTRLKL).

Binds M1 protein. May interact with human nucleoporins and exportin XPO1/CRM1.

The protein localises to the virion. It is found in the host nucleus. In terms of biological role, mediates the nuclear export of encapsidated genomic RNAs (ribonucleoproteins, RNPs). Acts as an adapter between viral RNPs complexes and the nuclear export machinery of the cell. Possesses no intrinsic RNA-binding activity, but includes a C-terminal M1-binding domain. This domain is believed to allow recognition of RNPs to which the M1 protein is bound. Because the M1 protein is not available in large quantities until the later stages of infection, such an indirect recognition mechanism probably ensures that genomic RNPs are not exported from the nucleus before sufficient quantities of viral mRNA and progeny genomic RNA have been synthesized. Furthermore, the RNPs enters the cytoplasm only when they have associated with the M1 protein that is necessary to guide them to the plasma membrane. May down-regulate viral RNA synthesis when overproduced. This is Nuclear export protein (NS) from Influenza C virus (strain C/Great lakes/1167/1954).